Here is a 530-residue protein sequence, read N- to C-terminus: Vesicular acetylcholine transporter (530 aa).

The Cytoplasmic portion of the chain corresponds to 1-33; it reads MEPTAPTGQARAAATKLSEAVGAALQEPQRQRR. Residues 34–54 form a helical membrane-spanning segment; that stretch reads LVLVIVCVALLLDNMLYMVIV. Over 55–125 the chain is Lumenal, vesicle; it reads PIVPDYIAHM…PTESEDVKIG (71 aa). 2 N-linked (GlcNAc...) asparagine glycosylation sites follow: Asn89 and Asn96. Residues 126 to 146 traverse the membrane as a helical segment; it reads VLFASKAILQLLVNPLSGPFI. The Cytoplasmic portion of the chain corresponds to 147–152; the sequence is DRMSYD. A helical membrane pass occupies residues 153–173; sequence VPLLIGLGVMFASTVMFAFAE. Residues 174–182 lie on the Lumenal, vesicle side of the membrane; sequence DYATLFAAR. Residues 183–203 form a helical membrane-spanning segment; it reads SLQGLGSAFADTSGIAMIADK. Over 204 to 213 the chain is Cytoplasmic; the sequence is YPEEPERSRA. The chain crosses the membrane as a helical span at residues 214 to 234; sequence LGVALAFISFGSLVAPPFGGI. The Lumenal, vesicle portion of the chain corresponds to 235-242; sequence LYEFAGKR. Residues 243–263 traverse the membrane as a helical segment; that stretch reads VPFLVLAAVSLFDALLLLAVA. Residues 264–289 lie on the Cytoplasmic side of the membrane; that stretch reads KPFSAAARARANLPVGTPIHRLMLDP. The chain crosses the membrane as a helical span at residues 290–310; sequence YIAVVAGALTTCNIPLAFLEP. Over 311–325 the chain is Lumenal, vesicle; it reads TIATWMKHTMAASEW. A helical transmembrane segment spans residues 326 to 346; it reads EMGMVWLPAFVPHVLGVYLTV. At 347–356 the chain is on the cytoplasmic side; that stretch reads RLAARYPHLQ. Residues 357 to 377 traverse the membrane as a helical segment; the sequence is WLYGALGLAVIGVSSCVVPAC. Topologically, residues 378 to 388 are lumenal, vesicle; it reads RSFAPLVVSLC. A helical membrane pass occupies residues 389–409; sequence GLCFGIALVDTALLPTLAFLV. Residues 410–422 lie on the Cytoplasmic side of the membrane; sequence DVRHVSVYGSVYA. Residues 423-443 traverse the membrane as a helical segment; that stretch reads IADISYSVAYALGPIVAGHIV. Over 444–447 the chain is Lumenal, vesicle; it reads HSLG. A helical transmembrane segment spans residues 448–468; that stretch reads FEQLSLGMGLANLLYAPVLLL. At 469-530 the chain is on the cytoplasmic side; sequence LRNVGLLTRS…EDDYNYYSRS (62 aa). The interval 471–530 is mediates interaction with SEC14L1; sequence NVGLLTRSRSERDVLLDEPPQGLYDAVRLREVQGKDGGEPCSPPGPFDGCEDDYNYYSRS. A disordered region spans residues 504–530; the sequence is GKDGGEPCSPPGPFDGCEDDYNYYSRS.

The protein belongs to the major facilitator superfamily. Vesicular transporter family. Interacts with SEC14L1. As to expression, high expression in all major cholinergic cell groups, including peripheral postganglionic parasympathetic cells, preganglionic sympathetic and parasympathetic cells, ventral spinal cord and brainstem motoneurons, cell groups in the basal forebrain, the habenula and the corpus striatum. Weakly expressed in the cortex and hippocampus.

The protein localises to the cytoplasmic vesicle. It localises to the secretory vesicle. It is found in the synaptic vesicle membrane. The enzyme catalyses acetylcholine(out) + 2 H(+)(in) = acetylcholine(in) + 2 H(+)(out). The catalysed reaction is choline(in) + 2 H(+)(out) = choline(out) + 2 H(+)(in). It carries out the reaction serotonin(in) + 2 H(+)(out) = serotonin(out) + 2 H(+)(in). Its activity is regulated as follows. Potently inhibited by L-vesamicol. Electrogenic antiporter that exchanges one cholinergic neurotransmitter, acetylcholine or choline, with two intravesicular protons across the membrane of synaptic vesicles. Uses the electrochemical proton gradient established by the V-type proton-pump ATPase to store neurotransmitters inside the vesicles prior to their release via exocytosis. Determines cholinergic vesicular quantal size at presynaptic nerve terminals in developing neuro-muscular junctions with an impact on motor neuron differentiation and innervation pattern. Part of forebrain cholinergic system, regulates hippocampal synapse transmissions that underlie spatial memory formation. Can transport serotonin. The protein is Vesicular acetylcholine transporter (Slc18a3) of Rattus norvegicus (Rat).